The following is a 120-amino-acid chain: MHNKIVRIASSALTGGKLLEKLKPLTRWEVQWDPNKTKCLGITREVTFKDYETTWAFLTRVSMRSHLWGHHPLIHTSYTWVKLELHTHDIDPKDGAHSQLSDIDVRMAKRIDSYIDEMTT.

Belongs to the pterin-4-alpha-carbinolamine dehydratase family.

The catalysed reaction is (4aS,6R)-4a-hydroxy-L-erythro-5,6,7,8-tetrahydrobiopterin = (6R)-L-erythro-6,7-dihydrobiopterin + H2O. The chain is Putative pterin-4-alpha-carbinolamine dehydratase from Saccharomyces cerevisiae (strain ATCC 204508 / S288c) (Baker's yeast).